Reading from the N-terminus, the 122-residue chain is MIQPQTYLNVADNSGARELMCIRIIGASNRRYAHIGDVIVAVIKEAIPNSPLERSEVIRAVIVRTCKELKRNNGTIIRYDDNAAVVIDQEGNPKGTRVFGAIPRELRQLNFTKIVSLAPEVL.

It belongs to the universal ribosomal protein uL14 family. As to quaternary structure, part of the 50S ribosomal subunit.

It localises to the plastid. Its subcellular location is the chloroplast. Binds to 23S rRNA. The chain is Large ribosomal subunit protein uL14c from Arabis hirsuta (Hairy rock-cress).